The chain runs to 455 residues: Phosphoglucosamine mutase (455 aa).

The active-site Phosphoserine intermediate is Ser-102. Mg(2+)-binding residues include Ser-102, Asp-241, Asp-243, and Asp-245. The residue at position 102 (Ser-102) is a Phosphoserine.

This sequence belongs to the phosphohexose mutase family. The cofactor is Mg(2+). In terms of processing, activated by phosphorylation.

It catalyses the reaction alpha-D-glucosamine 1-phosphate = D-glucosamine 6-phosphate. Catalyzes the conversion of glucosamine-6-phosphate to glucosamine-1-phosphate. The protein is Phosphoglucosamine mutase of Legionella pneumophila (strain Corby).